Here is a 351-residue protein sequence, read N- to C-terminus: Uroporphyrinogen decarboxylase (351 aa).

Substrate contacts are provided by residues 25 to 29 (RQAGR), aspartate 74, tyrosine 151, serine 206, and histidine 325.

The protein belongs to the uroporphyrinogen decarboxylase family. Homodimer.

The protein localises to the cytoplasm. The catalysed reaction is uroporphyrinogen III + 4 H(+) = coproporphyrinogen III + 4 CO2. It participates in porphyrin-containing compound metabolism; protoporphyrin-IX biosynthesis; coproporphyrinogen-III from 5-aminolevulinate: step 4/4. Catalyzes the decarboxylation of four acetate groups of uroporphyrinogen-III to yield coproporphyrinogen-III. The protein is Uroporphyrinogen decarboxylase of Pelodictyon phaeoclathratiforme (strain DSM 5477 / BU-1).